Reading from the N-terminus, the 25-residue chain is Ranatuerin-1C (25 aa).

An intrachain disulfide couples C19 to C25.

Expressed by the skin glands.

It is found in the secreted. Its function is as follows. Antibacterial activity against Gram-positive bacterium S.aureus (MIC=55 uM) and Gram-negative bacterium E.coli (MIC=1.5 uM). Has activity against C.albicans (MIC=58 uM). This is Ranatuerin-1C from Lithobates clamitans (Green frog).